Reading from the N-terminus, the 135-residue chain is Surface presentation of antigens protein SpaK (135 aa).

It belongs to the SpaK family.

Its function is as follows. Involved in a secretory pathway responsible for the surface presentation of determinants needed for the entry of Salmonella species into mammalian cells. The chain is Surface presentation of antigens protein SpaK (spaK) from Salmonella typhi.